A 148-amino-acid chain; its full sequence is UPF0260 protein Sfri_1740 (148 aa).

It belongs to the UPF0260 family.

This Shewanella frigidimarina (strain NCIMB 400) protein is UPF0260 protein Sfri_1740.